The primary structure comprises 61 residues: Neurotoxin-like protein 1 (61 aa).

Cystine bridges form between Cys3-Cys24, Cys17-Cys38, Cys42-Cys53, and Cys54-Cys59.

As to expression, expressed by the venom gland.

It is found in the secreted. The sequence is that of Neurotoxin-like protein 1 from Causus rhombeatus (Rhombic night adder).